The chain runs to 350 residues: Small ribosomal subunit biogenesis GTPase RsgA (350 aa).

Over residues methionine 1 to asparagine 17 the composition is skewed to polar residues. The disordered stretch occupies residues methionine 1–aspartate 33. The region spanning threonine 104–phenylalanine 273 is the CP-type G domain. Residues asparagine 160–aspartate 163 and glycine 214–serine 222 contribute to the GTP site. Cysteine 297, cysteine 302, histidine 304, and cysteine 310 together coordinate Zn(2+).

Belongs to the TRAFAC class YlqF/YawG GTPase family. RsgA subfamily. In terms of assembly, monomer. Associates with 30S ribosomal subunit, binds 16S rRNA. Requires Zn(2+) as cofactor.

It localises to the cytoplasm. One of several proteins that assist in the late maturation steps of the functional core of the 30S ribosomal subunit. Helps release RbfA from mature subunits. May play a role in the assembly of ribosomal proteins into the subunit. Circularly permuted GTPase that catalyzes slow GTP hydrolysis, GTPase activity is stimulated by the 30S ribosomal subunit. The sequence is that of Small ribosomal subunit biogenesis GTPase RsgA from Escherichia fergusonii (strain ATCC 35469 / DSM 13698 / CCUG 18766 / IAM 14443 / JCM 21226 / LMG 7866 / NBRC 102419 / NCTC 12128 / CDC 0568-73).